Consider the following 576-residue polypeptide: (+)-alpha-terpineol synthase (576 aa).

The (2E)-geranyl diphosphate site is built by R286, D323, D327, R466, and N469. 2 residues coordinate Mg(2+): D323 and D327. The short motif at 323-327 (DDVYD) is the DDXXD motif element. Positions 469, 473, and 477 each coordinate Mg(2+).

This sequence belongs to the terpene synthase family. Tpsb subfamily. Mg(2+) is required as a cofactor. The cofactor is Mn(2+).

It carries out the reaction (2E,6E)-farnesyl diphosphate = beta-bisabolene + diphosphate. The enzyme catalyses (2E)-geranyl diphosphate + H2O = (R)-alpha-terpineol + diphosphate. It catalyses the reaction (2E)-geranyl diphosphate = (4S)-limonene + diphosphate. It participates in secondary metabolite biosynthesis; terpenoid biosynthesis. Monoterpene synthase which catalyzes the conversion of (2E)-geranyl diphosphate (GPP) to (R)-alpha-terpineol and (4S)-limonene, as well as small quantities of linalool, myrcene, (-)-alpha-pinene, (+)-sabinene and geraniol. To a lower extent, catalyzes the conversion of (2E,6E)-farnesyl diphosphate (FPP) to beta-bisabolene. The polypeptide is (+)-alpha-terpineol synthase (Santalum album (White sandalwood)).